We begin with the raw amino-acid sequence, 84 residues long: Acetylcholine receptor subunit alpha (84 aa).

Residues Cys7 and Cys21 are joined by a disulfide bond. Asn20 and Asn66 each carry an N-linked (GlcNAc...) asparagine glycan. Cys71 and Cys72 form a disulfide bridge.

The protein belongs to the ligand-gated ion channel (TC 1.A.9) family. Acetylcholine receptor (TC 1.A.9.1) subfamily. Alpha-1/CHRNA1 sub-subfamily. As to quaternary structure, one of the alpha chains that assemble within the acetylcholine receptor, a pentamer of two alpha chains, a beta, a delta, and a gamma (in immature muscle) or epsilon (in mature muscle) chains. The muscle heteropentamer composed of alpha-1, beta-1, delta, epsilon subunits interacts with the alpha-conotoxin ImII.

Its subcellular location is the postsynaptic cell membrane. The protein localises to the cell membrane. It catalyses the reaction K(+)(in) = K(+)(out). The enzyme catalyses Na(+)(in) = Na(+)(out). In terms of biological role, upon acetylcholine binding, the AChR responds by an extensive change in conformation that affects all subunits and leads to opening of an ion-conducting channel across the plasma membrane. In Herpestes ichneumon (Egyptian mongoose), this protein is Acetylcholine receptor subunit alpha (CHRNA1).